Reading from the N-terminus, the 69-residue chain is Large ribosomal subunit protein uL29 (69 aa).

It belongs to the universal ribosomal protein uL29 family.

The sequence is that of Large ribosomal subunit protein uL29 from Treponema denticola (strain ATCC 35405 / DSM 14222 / CIP 103919 / JCM 8153 / KCTC 15104).